A 343-amino-acid chain; its full sequence is Phenylalanine--tRNA ligase alpha subunit (343 aa).

A Mg(2+)-binding site is contributed by Glu264.

The protein belongs to the class-II aminoacyl-tRNA synthetase family. Phe-tRNA synthetase alpha subunit type 1 subfamily. In terms of assembly, tetramer of two alpha and two beta subunits. The cofactor is Mg(2+).

It is found in the cytoplasm. The catalysed reaction is tRNA(Phe) + L-phenylalanine + ATP = L-phenylalanyl-tRNA(Phe) + AMP + diphosphate + H(+). This is Phenylalanine--tRNA ligase alpha subunit from Aromatoleum aromaticum (strain DSM 19018 / LMG 30748 / EbN1) (Azoarcus sp. (strain EbN1)).